A 214-amino-acid chain; its full sequence is Type IV major pilin protein PilE1 (214 aa).

Positions 1 to 7 are cleaved as a propeptide — leader sequence; that stretch reads MNTLQKG. Phe-8 is subject to N-methylphenylalanine. A helical transmembrane segment spans residues 8-28; that stretch reads FTLIELMIVIAIVGILAAVAL. Cys-127 and Cys-161 are disulfide-bonded. A disordered region spans residues 182–214; that stretch reads AGTDAVTADTTGKDKEIDTKHLPSTCRDKSSAE. Positions 192-214 are enriched in basic and acidic residues; sequence TGKDKEIDTKHLPSTCRDKSSAE.

Belongs to the N-Me-Phe pilin family. The pili are polar flexible filaments of about 5.4 nanometers diameter and 2.5 micrometers average length; they consist of only a single polypeptide chain arranged in a helical configuration of five subunits per turn in the assembled pilus.

Its subcellular location is the fimbrium. It localises to the membrane. Functionally, major component of the type IV pilus (T4P) that plays a role in cellular adherence, microcolony formation, resistance to neutrophil mediated killing, twitching motility as well as transformation. Mediates the attachment and the formation of bacterial microcolonies on host epithelial cells. Mechanistically, pili retractation induces host NF-kappa-B activation in infected cells, which is temporally associated with the formation of gonococcal microcolonies. The sequence is that of Type IV major pilin protein PilE1 (pilE1) from Neisseria gonorrhoeae.